The sequence spans 1582 residues: Sca1 complex scaffold protein scaA (1582 aa).

Composition is skewed to low complexity over residues 1–14 (MSSL…TPST) and 109–131 (LSPS…TTST). 2 disordered regions span residues 1-22 (MSSL…TFSK) and 108-147 (GLSP…QIKK). The TPR 1 repeat unit spans residues 4-37 (LDPSLSTTPSTNRRGTFSKAKSFRRAALNLEPQG). A TPR 2 repeat occupies 166-199 (IYTSFPESMAFDDYMDYEESLVEWKRQVEQNLGI). The segment at 246-349 (IKETNSSVND…PSTGSLAGFV (104 aa)) is disordered. Polar residues-rich tracts occupy residues 249-267 (TNSS…PTLR), 288-310 (NKDN…NSGI), and 318-332 (SDTS…QLDG). S359 carries the phosphoserine; by PKB modification. A gefA and gefH binding region spans residues 400 to 600 (RSGSGFGMDH…QRQTSTWFRG (201 aa)). 2 disordered regions span residues 468 to 493 (PKNS…GVGG) and 686 to 734 (SLSS…DKDK). Composition is skewed to gly residues over residues 478 to 493 (GSGG…GVGG) and 694 to 714 (QQQG…GSGS). Residues 715–726 (GLNMSGTSGSSG) are compositionally biased toward low complexity. Residues 742-777 (MHSINNTTNVGTKEDRRQYTKILQTYEQRLQFSFRL) form a TPR 3 repeat. Residues 864-875 (GGGSGGASGGGI) are compositionally biased toward gly residues. Residues 864–978 (GGGSGGASGG…GSISTHPNTP (115 aa)) form a disordered region. Positions 903–928 (HIPSGSSLLSSPPNRQGSTGSFSFIG) are enriched in low complexity. Over residues 940–953 (NSSSLESPRTQSQL) the composition is skewed to polar residues. Positions 960–972 (GSSPRSHSGGSIS) are enriched in low complexity. Residues 1000–1400 (FLDLTNEKLA…SIKKEGNLYN (401 aa)) form a pppA and pho2B binding region. A TPR 4 repeat occupies 1080–1113 (TQEVVRLVFVYYYLGIIQERLNFFSNNVGILGFV).

Component of the Sca1 complex composed of at least gefA, gefH, scaA, phr, and the protein phosphatase 2A subunits pppA and pho2B. Post-translationally, phosphorylated at Ser-359 by PKB and PKBR1 is induced by chemoattractant.

It localises to the cell membrane. Component of the Sca1 complex, a regulator of cell motility, chemotaxis and signal relay. The Sca1 complex is recruited to the plasma membrane in a chemoattractant- and F-actin-dependent manner and is enriched at the leading edge of chemotaxing cells where it regulates F-actin dynamics and signal relay by controlling the activation of rasC and the downstream target of rapamycin complex 2 (TORC2)-Akt/protein kinase B (PKB) pathway. ScaA acts as a molecular scaffold, bringing together gefA, gefH and phr with PP2A. This Dictyostelium discoideum (Social amoeba) protein is Sca1 complex scaffold protein scaA.